We begin with the raw amino-acid sequence, 697 residues long: T-related protein (697 aa).

The interval 1–60 is disordered; sequence MTTSHILSAVDPTTGLSGNVSGGGGGGGAGGGAGSGSPQHVTHNGHGHGHGLGGVAAVSG. 2 stretches are compositionally biased toward gly residues: residues 20–35 and 50–60; these read VSGGGGGGGAGGGAGS and HGLGGVAAVSG. Residues 96–264 constitute a DNA-binding region (T-box); that stretch reads LWLRFQNLTN…YNPFAKAFLD (169 aa). Low complexity predominate over residues 316–330; it reads SVSSAESVGPSSGGS. Disordered regions lie at residues 316–407 and 462–488; these read SVSS…GGIG and VCSGRNISSHNSPSPTNGSPSYTTSSP. Positions 337–351 are enriched in polar residues; the sequence is SLSSRSVAPTRTTPY. Low complexity-rich tracts occupy residues 352-373, 381-401, and 469-488; these read SRPRVVSGSGSNGSAGNASSTS, QTPTSLHSTSTGSVSTSVSSS, and SSHNSPSPTNGSPSYTTSSP.

It localises to the nucleus. In terms of biological role, required for the specification of the hindgut and anal pads. This is T-related protein (byn) from Drosophila melanogaster (Fruit fly).